The primary structure comprises 552 residues: Membrane protein insertase YidC (552 aa).

A helical membrane pass occupies residues 3–23 (IKRTVLWVIFFMSAVMLFDNW). Residues 35-59 (PSATPTKTVGSAAPGTTTPGTQPAD) are disordered. Low complexity predominate over residues 42–59 (TVGSAAPGTTTPGTQPAD). Transmembrane regions (helical) follow at residues 364–384 (WGWS…PLSA), 430–450 (FGGC…YWVL), and 504–524 (MMFM…GLVL).

It belongs to the OXA1/ALB3/YidC family. Type 1 subfamily. In terms of assembly, interacts with the Sec translocase complex via SecD. Specifically interacts with transmembrane segments of nascent integral membrane proteins during membrane integration.

It is found in the cell inner membrane. In terms of biological role, required for the insertion and/or proper folding and/or complex formation of integral membrane proteins into the membrane. Involved in integration of membrane proteins that insert both dependently and independently of the Sec translocase complex, as well as at least some lipoproteins. Aids folding of multispanning membrane proteins. The chain is Membrane protein insertase YidC from Paraburkholderia phytofirmans (strain DSM 17436 / LMG 22146 / PsJN) (Burkholderia phytofirmans).